The sequence spans 831 residues: Protein translocase subunit SecA (831 aa).

Residues Gln-88, 106–110 (GEGKT), and Asp-495 contribute to the ATP site. The Zn(2+) site is built by Cys-816, Cys-818, Cys-827, and Cys-828.

Belongs to the SecA family. As to quaternary structure, monomer and homodimer. Part of the essential Sec protein translocation apparatus which comprises SecA, SecYEG and auxiliary proteins SecDF-YajC and YidC. Requires Zn(2+) as cofactor.

It is found in the cell membrane. The protein resides in the cytoplasm. The enzyme catalyses ATP + H2O + cellular proteinSide 1 = ADP + phosphate + cellular proteinSide 2.. Part of the Sec protein translocase complex. Interacts with the SecYEG preprotein conducting channel. Has a central role in coupling the hydrolysis of ATP to the transfer of proteins into and across the cell membrane, serving as an ATP-driven molecular motor driving the stepwise translocation of polypeptide chains across the membrane. The polypeptide is Protein translocase subunit SecA (Lawsonia intracellularis (strain PHE/MN1-00)).